The sequence spans 168 residues: Ribosome maturation factor RimP (168 aa).

It belongs to the RimP family.

The protein resides in the cytoplasm. Functionally, required for maturation of 30S ribosomal subunits. The chain is Ribosome maturation factor RimP from Mycoplasma mobile (strain ATCC 43663 / 163K / NCTC 11711) (Mesomycoplasma mobile).